The primary structure comprises 414 residues: NAC domain-containing protein 35 (414 aa).

Residues 1-21 (MAIVSSTTSIIPMSNQVNNNE) show a composition bias toward polar residues. The tract at residues 1–47 (MAIVSSTTSIIPMSNQVNNNEKGIEDNDHRGGQESHVQNEDEADDHD) is disordered. A compositionally biased stretch (basic and acidic residues) spans 22-47 (KGIEDNDHRGGQESHVQNEDEADDHD). In terms of domain architecture, NAC spans 51-198 (VMPGFRFHPT…EISLCRVYKR (148 aa)). The DNA-binding element occupies 149 to 204 (IGLKKTLVFYSGKAPKGTRTSWIMNEYRLPHHETEKYQKAEISLCRVYKRPGVEDH). The tract at residues 200 to 251 (GVEDHPSVPRSLSTRHHNHNSSTSSRLALRQQQHHSSSSNHSDNNLNNNNNI) is disordered. The segment covering 233–251 (HHSSSSNHSDNNLNNNNNI) has biased composition (low complexity).

Expressed in aerial organs in early stages of seedling development.

The protein resides in the nucleus. In terms of biological role, transcription factor that acts as a floral repressor. Controls flowering time by negatively regulating CONSTANS (CO) expression in a GIGANTEA (GI)-independent manner. Regulates the plant cold response by positive regulation of the cold response genes COR15A and KIN1. May coordinate cold response and flowering time. The chain is NAC domain-containing protein 35 from Arabidopsis thaliana (Mouse-ear cress).